The following is a 534-amino-acid chain: NAD(P)H-quinone oxidoreductase chain 4 (534 aa).

14 helical membrane-spanning segments follow: residues 12-32, 44-64, 96-116, 120-140, 144-164, 176-196, 220-240, 251-271, 285-305, 314-334, 340-360, 384-404, 425-445, and 472-492; these read FPWL…IPFF, FALS…INGF, MPLI…AWPV, PKLF…VFAV, LLFF…LAIW, FIIY…AMGF, ILCY…VPLH, TAPV…YALL, FAPL…LTSF, IAYS…SFSS, AMLQ…LVGA, FALW…SGFV, VVMA…LLSM, and VYII…PRLV.

Belongs to the complex I subunit 4 family.

The protein resides in the cellular thylakoid membrane. The enzyme catalyses a plastoquinone + NADH + (n+1) H(+)(in) = a plastoquinol + NAD(+) + n H(+)(out). It catalyses the reaction a plastoquinone + NADPH + (n+1) H(+)(in) = a plastoquinol + NADP(+) + n H(+)(out). Its function is as follows. NDH-1 shuttles electrons from NAD(P)H, via FMN and iron-sulfur (Fe-S) centers, to quinones in the respiratory chain. The immediate electron acceptor for the enzyme in this species is believed to be plastoquinone. Couples the redox reaction to proton translocation (for every two electrons transferred, four hydrogen ions are translocated across the cytoplasmic membrane), and thus conserves the redox energy in a proton gradient. This chain is NAD(P)H-quinone oxidoreductase chain 4, found in Prochlorococcus marinus (strain AS9601).